Reading from the N-terminus, the 210-residue chain is Guanylate kinase (210 aa).

A Guanylate kinase-like domain is found at 8 to 188 (GNLFIIAAPS…SLASLEHIVL (181 aa)). 15–22 (APSGAGKS) contacts ATP.

It belongs to the guanylate kinase family.

Its subcellular location is the cytoplasm. It carries out the reaction GMP + ATP = GDP + ADP. Essential for recycling GMP and indirectly, cGMP. This Idiomarina loihiensis (strain ATCC BAA-735 / DSM 15497 / L2-TR) protein is Guanylate kinase.